A 962-amino-acid chain; its full sequence is Protein suppressor of underreplication (962 aa).

Disordered stretches follow at residues 353–413, 438–590, 658–712, 866–900, and 916–962; these read EIVT…TRAA, TPTP…LSGS, NSSH…SPDL, QERT…TQAT, and QTSS…ELFK. Positions 372 to 382 are enriched in basic residues; sequence PRTKSKKKCSK. Basic and acidic residues predominate over residues 386–395; sequence PCKEADLTDS. 2 stretches are compositionally biased toward polar residues: residues 438 to 448 and 480 to 489; these read TPTPSGATTAI and LTRSAESKIN. Residues 524–552 show a composition bias toward basic and acidic residues; the sequence is VKQESKAKAKPEQKKKIKTVDKPAQETPK. Over residues 553-562 the composition is skewed to basic residues; it reads RKPGRPRKCK. The segment covering 564–576 has biased composition (polar residues); sequence LTETLGKSKTKPN. Residues 673 to 683 show a composition bias toward basic residues; it reads RRTKALKRKRK. Composition is skewed to polar residues over residues 703-712 and 866-880; these read RSATNKSPDL and QERT…NSIV. Positions 885–894 are enriched in basic residues; sequence KSPKSPKHGA. Residues 916–944 are compositionally biased toward polar residues; sequence QTSSVESVSAPSTPVNPSTSAAACQTRTA. The span at 953–962 shows a compositional bias: basic residues; sequence TKRKRLELFK.

Its subcellular location is the nucleus. It localises to the chromosome. Functionally, required for underreplication of DNA, which is found in many late replicating euchromatic regions of salivary gland polytene chromosomes. Controls chromatin organization in polytene chromosomes. This is Protein suppressor of underreplication (SuUR) from Drosophila erecta (Fruit fly).